The sequence spans 329 residues: GTP 3',8-cyclase (329 aa).

The region spanning Ala-8 to Ala-234 is the Radical SAM core domain. Arg-17 lines the GTP pocket. [4Fe-4S] cluster-binding residues include Cys-24 and Cys-28. Tyr-30 is a binding site for S-adenosyl-L-methionine. Cys-31 serves as a coordination point for [4Fe-4S] cluster. Arg-68 contacts GTP. Residue Gly-72 participates in S-adenosyl-L-methionine binding. Thr-99 lines the GTP pocket. Residue Ser-123 coordinates S-adenosyl-L-methionine. Lys-160 provides a ligand contact to GTP. Met-194 serves as a coordination point for S-adenosyl-L-methionine. Positions 257 and 260 each coordinate [4Fe-4S] cluster. Arg-262–Arg-264 serves as a coordination point for GTP. Cys-274 contributes to the [4Fe-4S] cluster binding site.

This sequence belongs to the radical SAM superfamily. MoaA family. As to quaternary structure, monomer and homodimer. [4Fe-4S] cluster serves as cofactor.

It catalyses the reaction GTP + AH2 + S-adenosyl-L-methionine = (8S)-3',8-cyclo-7,8-dihydroguanosine 5'-triphosphate + 5'-deoxyadenosine + L-methionine + A + H(+). It participates in cofactor biosynthesis; molybdopterin biosynthesis. In terms of biological role, catalyzes the cyclization of GTP to (8S)-3',8-cyclo-7,8-dihydroguanosine 5'-triphosphate. The polypeptide is GTP 3',8-cyclase (Escherichia fergusonii (strain ATCC 35469 / DSM 13698 / CCUG 18766 / IAM 14443 / JCM 21226 / LMG 7866 / NBRC 102419 / NCTC 12128 / CDC 0568-73)).